A 1175-amino-acid polypeptide reads, in one-letter code: DNA-directed RNA polymerase subunit beta (1175 aa).

Positions 1142–1175 (PMELSGSDDDEFDQAGASLGINLSRDERSDADIA) are disordered. The segment covering 1165–1175 (SRDERSDADIA) has biased composition (basic and acidic residues).

The protein belongs to the RNA polymerase beta chain family. The RNAP catalytic core consists of 2 alpha, 1 beta, 1 beta' and 1 omega subunit. When a sigma factor is associated with the core the holoenzyme is formed, which can initiate transcription.

The enzyme catalyses RNA(n) + a ribonucleoside 5'-triphosphate = RNA(n+1) + diphosphate. DNA-dependent RNA polymerase catalyzes the transcription of DNA into RNA using the four ribonucleoside triphosphates as substrates. The sequence is that of DNA-directed RNA polymerase subunit beta from Corynebacterium diphtheriae (strain ATCC 700971 / NCTC 13129 / Biotype gravis).